A 150-amino-acid chain; its full sequence is Auxin-binding protein 5 (150 aa).

The signal sequence occupies residues 1 to 41 (MVRRRPATGAAQRPQLAAVGRGLLLASVLAAAASSLPVAES). Residues H98, H100, and E104 each coordinate Zn(2+). N136 is a glycosylation site (N-linked (GlcNAc...) asparagine). H147 contacts Zn(2+).

In terms of assembly, homodimer.

The protein localises to the endoplasmic reticulum lumen. In terms of biological role, this is probably a receptor for the plant hormone auxin. In Zea mays (Maize), this protein is Auxin-binding protein 5 (ABP5).